Reading from the N-terminus, the 417-residue chain is Inactive GDSL esterase/lipase-like protein 25 (417 aa).

Residues 1-50 (MLLIPSFTANSNEPPPSKLSLSDLSMAILKSHFFLLFPLLLLHFHTVSFA) form the signal peptide. Asn160, Asn308, and Asn311 each carry an N-linked (GlcNAc...) asparagine glycan. His331 is a catalytic residue.

This sequence belongs to the 'GDSL' lipolytic enzyme family. Interacts with the PYK10 complex and TGG2, but not with TGG1 or PEN2. In terms of tissue distribution, expressed throughout the seedling, rosette leaves, roots, inflorescence and imbibed seed, but not in pollen.

Its subcellular location is the vacuole. The protein localises to the endoplasmic reticulum. Functionally, involved in organization of the endomembrane system and is required for endoplasmic reticulum morphology and organelle distribution. May act by inhibiting the formation of PYK10 complex by binding to GLL23 and exporting it from the ER. Required for proper subcellular localization of myrosinase TGG2. Has no lipase or esterase activity. In Arabidopsis thaliana (Mouse-ear cress), this protein is Inactive GDSL esterase/lipase-like protein 25 (MVP1).